The sequence spans 336 residues: Ferrochelatase (336 aa).

Fe cation is bound by residues histidine 206 and glutamate 287.

It belongs to the ferrochelatase family.

The protein localises to the cytoplasm. It catalyses the reaction heme b + 2 H(+) = protoporphyrin IX + Fe(2+). Its pathway is porphyrin-containing compound metabolism; protoheme biosynthesis; protoheme from protoporphyrin-IX: step 1/1. In terms of biological role, catalyzes the ferrous insertion into protoporphyrin IX. The protein is Ferrochelatase of Neisseria gonorrhoeae (strain ATCC 700825 / FA 1090).